The primary structure comprises 436 residues: MFDSTLNPLWQRYILAVQEEVKPALGCTEPISLALAASVAAAELEGPVERVEAWVSPNLMKNGLGVTVPGTGMVGLPIAAALGALGGNANAGLEVLKDATAQAIADAKALLAAGKVSVKIQEPCNEILFSRAKVWNGEKWACVTIVGGHTNIVHIETHDGVVFTQQACVAEGEQESPLSVLSRTTLAEILKFVNEVQFAAIRFILDSAKLNCALSQEGLSGNWGLHIGATLEKQCERGLLAKDLSSSIVIRTSAASDARMGGATLPAMSNSGSGNQGITATMPVVVVAEHFGADDERLARALMLLHLSAIYIHNQLPRLSALCAATTAAMGAAAGMAWLVDGRYETISMAISSMIGDVSGMICDGASNSCAMKVSTSASAAWKAVLMALDDTAVTGNEGIVAHDVEQSIANLCALASHSMQQTDRQIIEIMASKAR.

It belongs to the UPF0597 family.

In Shigella dysenteriae serotype 1 (strain Sd197), this protein is UPF0597 protein YhaM.